The sequence spans 124 residues: Large ribosomal subunit protein bL17 (124 aa).

Belongs to the bacterial ribosomal protein bL17 family. As to quaternary structure, part of the 50S ribosomal subunit. Contacts protein L32.

The chain is Large ribosomal subunit protein bL17 from Mycoplasma pneumoniae (strain ATCC 29342 / M129 / Subtype 1) (Mycoplasmoides pneumoniae).